Reading from the N-terminus, the 227-residue chain is Phosphoglycolate phosphatase (227 aa).

Residue D8 is the Nucleophile of the active site. Mg(2+)-binding residues include D8 and D10. K152 is a substrate binding site. Positions 175 and 179 each coordinate Mg(2+).

This sequence belongs to the archaeal SPP-like hydrolase family. Mg(2+) is required as a cofactor.

The catalysed reaction is 2-phosphoglycolate + H2O = glycolate + phosphate. Functionally, catalyzes the dephosphorylation of 2-phosphoglycolate. This chain is Phosphoglycolate phosphatase, found in Halorubrum lacusprofundi (strain ATCC 49239 / DSM 5036 / JCM 8891 / ACAM 34).